The primary structure comprises 604 residues: MLFRAVLLCAALGLSQAANPCCSNPCQNRGECMSTGFDQYKCDCTRTGFYGENCTTPEFLTRIKLLLKPTPNTVHYILTHFKGVWNIVNNIPFLRSLIMKYVLTSRSYLIDSPPTYNVHYGYKSWEAFSNLSYYTRALPPVADDCPTPMGVKGNKELPDSKEVLEKVLLRREFIPDPQGSNMMFAFFAQHFTHQFFKTDHKRGPGFTRGLGHGVDLNHIYGETLDRQHKLRLFKDGKLKYQVIGGEVYPPTVKDTQVEMIYPPHIPENLQFAVGQEVFGLVPGLMMYATIWLREHNRVCDILKQEHPEWGDEQLFQTSRLILIGETIKIVIEDYVQHLSGYHFKLKFDPELLFNQQFQYQNRIASEFNTLYHWHPLLPDTFNIEDQEYSFKQFLYNNSILLEHGLTQFVESFTRQIAGRVAGGRNVPIAVQAVAKASIDQSREMKYQSLNEYRKRFSLKPYTSFEELTGEKEMAAELKALYSDIDVMELYPALLVEKPRPDAIFGETMVELGAPFSLKGLMGNPICSPQYWKPSTFGGEVGFKIINTASIQSLICNNVKGCPFTSFNVQDPQPTKTATINASASHSRLDDINPTVLIKRRSTEL.

The signal sequence occupies residues 1–17; the sequence is MLFRAVLLCAALGLSQA. Positions 18-55 constitute an EGF-like domain; sequence ANPCCSNPCQNRGECMSTGFDQYKCDCTRTGFYGENCT. 4 disulfide bridges follow: Cys21/Cys32, Cys22/Cys145, Cys26/Cys42, and Cys44/Cys54. N-linked (GlcNAc...) asparagine glycosylation occurs at Asn53. Arg106 provides a ligand contact to substrate. Residue Asn130 is glycosylated (N-linked (GlcNAc...) asparagine). His193 serves as the catalytic Proton acceptor. Residue Tyr341 participates in substrate binding. Tyr371 acts as the For cyclooxygenase activity in catalysis. His374 provides a ligand contact to heme b. Asn396 carries N-linked (GlcNAc...) asparagine glycosylation. Cys526 is subject to S-nitrosocysteine. Cys555 and Cys561 are oxidised to a cystine. Ser565 is subject to O-acetylserine; by SPHK1. N-linked (GlcNAc...) asparagine glycosylation is present at Asn580.

The protein belongs to the prostaglandin G/H synthase family. In terms of assembly, homodimer. Heme b is required as a cofactor. Post-translationally, S-nitrosylation by NOS2 (iNOS) activates enzyme activity. S-nitrosylation may take place on different Cys residues in addition to Cys-526. In terms of processing, acetylated at Ser-565 by SPHK1. During neuroinflammation, acetylation by SPHK1 promotes neuronal secretion of specialized preresolving mediators (SPMs), especially 15-R-lipoxin A4, which results in an increase of phagocytic microglia. Following colon injury, expressed in the wound bed mesenchyme during the first phase of repair, probably by colonic mesenchymal stem cells (at protein level).

It localises to the microsome membrane. The protein resides in the endoplasmic reticulum membrane. Its subcellular location is the nucleus inner membrane. The protein localises to the nucleus outer membrane. The enzyme catalyses (5Z,8Z,11Z,14Z)-eicosatetraenoate + AH2 + 2 O2 = prostaglandin H2 + A + H2O. The catalysed reaction is (5Z,8Z,11Z,14Z)-eicosatetraenoate + 2 O2 = prostaglandin G2. It catalyses the reaction prostaglandin G2 + AH2 = prostaglandin H2 + A + H2O. It carries out the reaction (5Z,8Z,11Z,14Z,17Z)-eicosapentaenoate + 2 O2 = prostaglandin G3. The enzyme catalyses prostaglandin G3 + AH2 = prostaglandin H3 + A + H2O. The catalysed reaction is (8Z,11Z,14Z)-eicosatrienoate + 2 O2 = prostaglandin G1. It catalyses the reaction prostaglandin G1 + AH2 = prostaglandin H1 + A + H2O. It carries out the reaction 2-(5Z,8Z,11Z,14Z)-eicosatetraenoyl-sn-glycero-3-phosphoethanolamine + 2 O2 = 2-(prostaglandin G2)-sn-glycero-3-phosphoethanolamine. The enzyme catalyses 2-(prostaglandin G2)-sn-glycero-3-phosphoethanolamine + AH2 = 2-(prostaglandin H2)-sn-glycero-3-phosphoethanolamine + A + H2O. The catalysed reaction is 2-(5Z,8Z,11Z,14Z)-eicosatetraenoyl-sn-glycero-3-phosphocholine + 2 O2 = 2-(prostaglandin G2)-sn-glycero-3-phosphocholine. It catalyses the reaction 2-(prostaglandin G2)-sn-glycero-3-phosphocholine + AH2 = 2-(prostaglandin H2)-sn-glycero-3-phosphocholine + A + H2O. It carries out the reaction (15S)-hydroperoxy-(5Z,8Z,11Z,13E)-eicosatetraenoate + AH2 = (15S)-hydroxy-(5Z,8Z,11Z,13E)-eicosatetraenoate + A + H2O. The enzyme catalyses 2-(5Z,8Z,11Z,14Z)-eicosatetraenoyl-sn-glycero-3-phosphocholine + AH2 + O2 = 2-[(15S)-hydroxy-(5Z,8Z,11Z,13E)-eicosatetraenoyl]-sn-glycero-3-phosphocholine + A + H2O. The catalysed reaction is 2-(5Z,8Z,11Z,14Z)-eicosatetraenoyl-sn-glycero-3-phosphocholine + AH2 + O2 = 2-[(15R)-hydroxy-(5Z,8Z,11Z,13E)-eicosatetraenoyl]-sn-glycero-3-phosphocholine + A + H2O. It catalyses the reaction 2-(5Z,8Z,11Z,14Z)-eicosatetraenoyl-sn-glycero-3-phosphocholine + AH2 + O2 = 2-[(11R)-hydroxy-(5Z,8Z,12E,14Z)-eicosatetraenoyl]-sn-glycero-3-phosphocholine + A + H2O. It carries out the reaction (9Z,12Z)-octadecadienoate + AH2 + O2 = 9-hydroxy-(10E,12Z)-octadecadienoate + A + H2O. The enzyme catalyses (9Z,12Z)-octadecadienoate + AH2 + O2 = 13-hydroxy-(9Z,11E)-octadecadienoate + A + H2O. The catalysed reaction is (5Z,8Z,11Z,14Z)-eicosatetraenoate + AH2 + O2 = (15R)-hydroxy-(5Z,8Z,11Z,13E)-eicosatetraenoate + A + H2O. It catalyses the reaction (5Z,8Z,11Z,14Z)-eicosatetraenoate + AH2 + O2 = (11R)-hydroxy-(5Z,8Z,12E,14Z)-eicosatetraenoate + A + H2O. It carries out the reaction (5Z,8Z,11Z,14Z,17Z)-eicosapentaenoate + AH2 + O2 = (11R)-hydroxy-(5Z,8Z,12E,14Z,17Z)-eicosapentaenoate + A + H2O. The enzyme catalyses (5Z,8Z,11Z,14Z,17Z)-eicosapentaenoate + AH2 + O2 = (18S)-hydroxy-(5Z,8Z,11Z,14Z,16E)-eicosapentaenoate + A + H2O. The catalysed reaction is (5Z,8Z,11Z,14Z,17Z)-eicosapentaenoate + AH2 + O2 = (18R)-hydroxy-(5Z,8Z,11Z,14Z,16E)-eicosapentaenoate + A + H2O. It catalyses the reaction (5Z,8Z,11Z,14Z,17Z)-eicosapentaenoate + AH2 + O2 = (15R)-hydroxy-(5Z,8Z,11Z,13E,17Z)-eicosapentaenoate + A + H2O. It carries out the reaction (5Z,8Z,11Z,14Z,17Z)-eicosapentaenoate + AH2 + O2 = (15S)-hydroxy-(5Z,8Z,11Z,13E,17Z)-eicosapentaenoate + A + H2O. The enzyme catalyses (7Z,10Z,13Z,16Z,19Z)-docosapentaenoate + AH2 + O2 = 13R-hydroxy-(7Z,10Z,14E,16Z,19Z)-docosapentaenoate + A + H2O. The catalysed reaction is (4Z,7Z,10Z,13Z,16Z,19Z)-docosahexaenoate + AH2 + O2 = 13-hydroxy-(4Z,7Z,10Z,14E,16Z,19Z)-docosahexaenoate + A + H2O. It catalyses the reaction (5S)-hydroxy-(6E,8Z,11Z,14Z)-eicosatetraenoate + AH2 + O2 = (5S,15R)-dihydroxy-(6E,8Z,11Z,13E)-eicosatetraenoate + A + H2O. It carries out the reaction (4Z,7Z,10Z,13Z,16Z,19Z)-docosahexaenoate + AH2 + O2 = 17R-hydroxy-(4Z,7Z,10Z,13Z,15E,19Z)-docosahexaenoate + A + H2O. The enzyme catalyses (5S)-hydroxy-(6E,8Z,11Z,14Z)-eicosatetraenoate + AH2 + O2 = (5S,15S)-dihydroxy-(6E,8Z,11Z,13E)-eicosatetraenoate + A + H2O. The catalysed reaction is (5S)-hydroxy-(6E,8Z,11Z,14Z)-eicosatetraenoate + AH2 + O2 = (5S,11R)-dihydroxy-(6E,8Z,12E,14Z)-eicosatetraenoate + A + H2O. It catalyses the reaction 2-(5Z,8Z,11Z,14Z-eicosatetraenoyl)-glycerol + 2 O2 = 2-glyceryl-prostaglandin G2. It carries out the reaction 2-glyceryl-prostaglandin G2 + AH2 = 2-glyceryl-prostaglandin H2 + A + H2O. The enzyme catalyses (5Z,8Z,11Z,14Z)-eicosatetraenoate + O2 = (15R)-hydroperoxy-(5Z,8Z,11Z,13E)-eicosatetraenoate. The catalysed reaction is (5Z,8Z,11Z,14Z)-eicosatetraenoate + O2 = 11R-hydroperoxy-(5Z,8Z,12E,14Z)-eicosatetraenoate. It catalyses the reaction (9Z,12Z)-octadecadienoate + AH2 + O2 = (9R)-hydroxy-(10E,12Z)-octadecadienoate + A + H2O. It carries out the reaction (9Z,12Z)-octadecadienoate + AH2 + O2 = (9S)-hydroxy-(10E,12Z)-octadecadienoate + A + H2O. The enzyme catalyses (9Z,12Z)-octadecadienoate + AH2 + O2 = (13S)-hydroxy-(9Z,11E)-octadecadienoate + A + H2O. The catalysed reaction is (9Z,12Z)-octadecadienoate + AH2 + O2 = (13R)-hydroxy-(9Z,11E)-octadecadienoate + A + H2O. The protein operates within lipid metabolism; prostaglandin biosynthesis. With respect to regulation, inhibited by the nonsteroidal anti-inflammatory drugs aspirin, naproxen, diclofenac, meclofenamic acid, indomethacin and their analogs. Dual cyclooxygenase and peroxidase in the biosynthesis pathway of prostanoids, a class of C20 oxylipins mainly derived from arachidonate, with a particular role in the inflammatory response. The cyclooxygenase activity oxygenates arachidonate (AA, C20:4(n-6)) to the hydroperoxy endoperoxide prostaglandin G2 (PGG2), and the peroxidase activity reduces PGG2 to the hydroxy endoperoxide PGH2, the precursor of all 2-series prostaglandins and thromboxanes. This complex transformation is initiated by abstraction of hydrogen at carbon 13 (with S-stereochemistry), followed by insertion of molecular O2 to form the endoperoxide bridge between carbon 9 and 11 that defines prostaglandins. The insertion of a second molecule of O2 (bis-oxygenase activity) yields a hydroperoxy group in PGG2 that is then reduced to PGH2 by two electrons. Similarly catalyzes successive cyclooxygenation and peroxidation of dihomo-gamma-linoleate (DGLA, C20:3(n-6)) and eicosapentaenoate (EPA, C20:5(n-3)) to corresponding PGH1 and PGH3, the precursors of 1- and 3-series prostaglandins. In an alternative pathway of prostanoid biosynthesis, converts 2-arachidonoyl lysophopholipids to prostanoid lysophopholipids, which are then hydrolyzed by intracellular phospholipases to release free prostanoids. Metabolizes 2-arachidonoyl glycerol yielding the glyceryl ester of PGH2, a process that can contribute to pain response. Generates lipid mediators from n-3 and n-6 polyunsaturated fatty acids (PUFAs) via a lipoxygenase-type mechanism. Oxygenates PUFAs to hydroperoxy compounds and then reduces them to corresponding alcohols. Plays a role in the generation of resolution phase interaction products (resolvins) during both sterile and infectious inflammation. Metabolizes docosahexaenoate (DHA, C22:6(n-3)) to 17R-HDHA, a precursor of the D-series resolvins (RvDs). As a component of the biosynthetic pathway of E-series resolvins (RvEs), converts eicosapentaenoate (EPA, C20:5(n-3)) primarily to 18S-HEPE that is further metabolized by ALOX5 and LTA4H to generate 18S-RvE1 and 18S-RvE2. In vascular endothelial cells, converts docosapentaenoate (DPA, C22:5(n-3)) to 13R-HDPA, a precursor for 13-series resolvins (RvTs) shown to activate macrophage phagocytosis during bacterial infection. In activated leukocytes, contributes to oxygenation of hydroxyeicosatetraenoates (HETE) to diHETES (5,15-diHETE and 5,11-diHETE). Can also use linoleate (LA, (9Z,12Z)-octadecadienoate, C18:2(n-6)) as substrate and produce hydroxyoctadecadienoates (HODEs) in a regio- and stereospecific manner, being (9R)-HODE ((9R)-hydroxy-(10E,12Z)-octadecadienoate) and (13S)-HODE ((13S)-hydroxy-(9Z,11E)-octadecadienoate) its major products. During neuroinflammation, plays a role in neuronal secretion of specialized preresolving mediators (SPMs) 15R-lipoxin A4 that regulates phagocytic microglia. This chain is Prostaglandin G/H synthase 2, found in Mus musculus (Mouse).